The sequence spans 101 residues: Chaperone modulatory protein CbpM (101 aa).

This sequence belongs to the CbpM family.

Functionally, interacts with CbpA and inhibits both the DnaJ-like co-chaperone activity and the DNA binding activity of CbpA. Together with CbpA, modulates the activity of the DnaK chaperone system. Does not inhibit the co-chaperone activity of DnaJ. This chain is Chaperone modulatory protein CbpM, found in Salmonella agona (strain SL483).